Here is a 346-residue protein sequence, read N- to C-terminus: Putative alpha/beta hydrolase R526 (346 aa).

This sequence belongs to the AB hydrolase 3 family.

The protein resides in the virion. The sequence is that of Putative alpha/beta hydrolase R526 from Acanthamoeba polyphaga mimivirus (APMV).